Here is a 285-residue protein sequence, read N- to C-terminus: Lipoyl synthase (285 aa).

Cys36, Cys41, Cys47, Cys62, Cys66, Cys69, and Ser275 together coordinate [4Fe-4S] cluster. In terms of domain architecture, Radical SAM core spans 48 to 264; it reads FSKKTATFLI…KEYAISIGFK (217 aa).

It belongs to the radical SAM superfamily. Lipoyl synthase family. It depends on [4Fe-4S] cluster as a cofactor.

The protein resides in the cytoplasm. It carries out the reaction [[Fe-S] cluster scaffold protein carrying a second [4Fe-4S](2+) cluster] + N(6)-octanoyl-L-lysyl-[protein] + 2 oxidized [2Fe-2S]-[ferredoxin] + 2 S-adenosyl-L-methionine + 4 H(+) = [[Fe-S] cluster scaffold protein] + N(6)-[(R)-dihydrolipoyl]-L-lysyl-[protein] + 4 Fe(3+) + 2 hydrogen sulfide + 2 5'-deoxyadenosine + 2 L-methionine + 2 reduced [2Fe-2S]-[ferredoxin]. Its pathway is protein modification; protein lipoylation via endogenous pathway; protein N(6)-(lipoyl)lysine from octanoyl-[acyl-carrier-protein]: step 2/2. Functionally, catalyzes the radical-mediated insertion of two sulfur atoms into the C-6 and C-8 positions of the octanoyl moiety bound to the lipoyl domains of lipoate-dependent enzymes, thereby converting the octanoylated domains into lipoylated derivatives. This chain is Lipoyl synthase, found in Caldicellulosiruptor saccharolyticus (strain ATCC 43494 / DSM 8903 / Tp8T 6331).